A 472-amino-acid polypeptide reads, in one-letter code: Deoxyribodipyrimidine photo-lyase (472 aa).

A Photolyase/cryptochrome alpha/beta domain is found at 2–134 (TTHLVWFRQD…VCEGFDDSVI (133 aa)). Residues N109 and E110 each coordinate (6R)-5,10-methylene-5,6,7,8-tetrahydrofolate. Y223 lines the FAD pocket. R227 lines the DNA pocket. Residues 235-239 (TSRLS), W272, and 275-282 (ELIWREFY) each bind FAD. Interaction with DNA stretches follow at residues 275–282 (ELIWREFY) and 342–343 (NR). Position 373 to 375 (373 to 375 (DGD)) interacts with FAD. Q405 provides a ligand contact to DNA.

The protein belongs to the DNA photolyase class-1 family. As to quaternary structure, monomer. FAD is required as a cofactor. It depends on (6R)-5,10-methylene-5,6,7,8-tetrahydrofolate as a cofactor.

The enzyme catalyses cyclobutadipyrimidine (in DNA) = 2 pyrimidine residues (in DNA).. In terms of biological role, involved in repair of UV radiation-induced DNA damage. Catalyzes the light-dependent monomerization (300-600 nm) of cyclobutyl pyrimidine dimers (in cis-syn configuration), which are formed between adjacent bases on the same DNA strand upon exposure to ultraviolet radiation. This is Deoxyribodipyrimidine photo-lyase (phrB) from Escherichia coli (strain K12).